Consider the following 81-residue polypeptide: Acyl carrier protein (81 aa).

Positions 2–80 (SKVDNIEQKV…DVVNYIKEHK (79 aa)) constitute a Carrier domain. Ser40 carries the post-translational modification O-(pantetheine 4'-phosphoryl)serine.

The protein belongs to the acyl carrier protein (ACP) family. Post-translationally, 4'-phosphopantetheine is transferred from CoA to a specific serine of apo-ACP by AcpS. This modification is essential for activity because fatty acids are bound in thioester linkage to the sulfhydryl of the prosthetic group.

Its subcellular location is the cytoplasm. It functions in the pathway lipid metabolism; fatty acid biosynthesis. Functionally, carrier of the growing fatty acid chain in fatty acid biosynthesis. In Rickettsia bellii (strain OSU 85-389), this protein is Acyl carrier protein.